A 132-amino-acid polypeptide reads, in one-letter code: Small ribosomal subunit protein uS8 (132 aa).

Belongs to the universal ribosomal protein uS8 family. In terms of assembly, part of the 30S ribosomal subunit. Contacts proteins S5 and S12.

In terms of biological role, one of the primary rRNA binding proteins, it binds directly to 16S rRNA central domain where it helps coordinate assembly of the platform of the 30S subunit. The protein is Small ribosomal subunit protein uS8 of Exiguobacterium sibiricum (strain DSM 17290 / CCUG 55495 / CIP 109462 / JCM 13490 / 255-15).